The chain runs to 439 residues: Trigger factor (439 aa).

The 86-residue stretch at 165–250 folds into the PPIase FKBP-type domain; that stretch reads GDFAKFDFEG…LHEIQELKLP (86 aa).

Belongs to the FKBP-type PPIase family. Tig subfamily.

Its subcellular location is the cytoplasm. It carries out the reaction [protein]-peptidylproline (omega=180) = [protein]-peptidylproline (omega=0). In terms of biological role, involved in protein export. Acts as a chaperone by maintaining the newly synthesized protein in an open conformation. Functions as a peptidyl-prolyl cis-trans isomerase. The chain is Trigger factor from Campylobacter lari (strain RM2100 / D67 / ATCC BAA-1060).